A 348-amino-acid polypeptide reads, in one-letter code: Uroporphyrinogen decarboxylase (348 aa).

Substrate is bound by residues 27 to 31, Phe46, Asp76, Tyr152, Ser207, and His320; that span reads RQAGR.

This sequence belongs to the uroporphyrinogen decarboxylase family. In terms of assembly, homodimer.

It is found in the cytoplasm. It catalyses the reaction uroporphyrinogen III + 4 H(+) = coproporphyrinogen III + 4 CO2. The protein operates within porphyrin-containing compound metabolism; protoporphyrin-IX biosynthesis; coproporphyrinogen-III from 5-aminolevulinate: step 4/4. In terms of biological role, catalyzes the decarboxylation of four acetate groups of uroporphyrinogen-III to yield coproporphyrinogen-III. The polypeptide is Uroporphyrinogen decarboxylase (Bacillus cereus (strain G9842)).